Here is a 176-residue protein sequence, read N- to C-terminus: Peptide deformylase (176 aa).

Residues Cys92 and His134 each contribute to the Fe cation site. Residue Glu135 is part of the active site. His138 is a Fe cation binding site.

Belongs to the polypeptide deformylase family. Requires Fe(2+) as cofactor.

The enzyme catalyses N-terminal N-formyl-L-methionyl-[peptide] + H2O = N-terminal L-methionyl-[peptide] + formate. Functionally, removes the formyl group from the N-terminal Met of newly synthesized proteins. Requires at least a dipeptide for an efficient rate of reaction. N-terminal L-methionine is a prerequisite for activity but the enzyme has broad specificity at other positions. This chain is Peptide deformylase, found in Acinetobacter baumannii (strain SDF).